Here is an 88-residue protein sequence, read N- to C-terminus: MAHKKGASSSRNGRDSAAHRLGVKRFGGQVVKAGEILVRQRGTKFHPGVNVGRGGDDTLFAKAAGAVEFGIKRGRKTINIVEPATQDA.

The tract at residues 1 to 21 is disordered; the sequence is MAHKKGASSSRNGRDSAAHRL.

It belongs to the bacterial ribosomal protein bL27 family.

This chain is Large ribosomal subunit protein bL27, found in Mycobacterium ulcerans (strain Agy99).